The following is a 238-amino-acid chain: Large ribosomal subunit protein uL1 (238 aa).

The interval 217–238 (TNGPGVPVDETIQKNYADDAEA) is disordered.

It belongs to the universal ribosomal protein uL1 family. In terms of assembly, part of the 50S ribosomal subunit.

Binds directly to 23S rRNA. The L1 stalk is quite mobile in the ribosome, and is involved in E site tRNA release. Functionally, protein L1 is also a translational repressor protein, it controls the translation of the L11 operon by binding to its mRNA. The sequence is that of Large ribosomal subunit protein uL1 from Corynebacterium urealyticum (strain ATCC 43042 / DSM 7109).